The chain runs to 193 residues: Selenoprotein S A (193 aa).

A helical transmembrane segment spans residues 29 to 49 (WALASYGWYILFGCIILYFLI). The span at 114–125 (IETWDRMQEGKS) shows a compositional bias: basic and acidic residues. A disordered region spans residues 114–193 (IETWDRMQEG…RRGPSSGGUG (80 aa)). A compositionally biased stretch (low complexity) spans 137 to 153 (SPSTSASSSPSTSSSAP). A non-standard amino acid (selenocysteine) is located at residue Sec192.

This sequence belongs to the selenoprotein S family.

The protein resides in the endoplasmic reticulum membrane. It is found in the cytoplasm. Involved in the degradation process of misfolded endoplasmic reticulum (ER) luminal proteins. Participates in the transfer of misfolded proteins from the ER to the cytosol, where they are destroyed by the proteasome in a ubiquitin-dependent manner. The chain is Selenoprotein S A (vimp-a) from Xenopus laevis (African clawed frog).